The following is a 218-amino-acid chain: MKKYKAQFIEFMLDRKILTFGEFILKSGRVSPYFFNAGLFNKGSDLIKLGRFYADALIDSGIECDLLFGPAYKGIPITITTAMALYANHHLDLTYCFNRKEIKDHGEGGGLVGGALQGKVLLVDDVITAGTAIRESVEIIHAHSASLAGILVALDRQERGNGTLSAIEEIEQKYQSKVISIVTLEDMIHFLKNEKTMIEAFSALNKYAEQYGVLRKNL.

Position 26 (lysine 26) interacts with 5-phospho-alpha-D-ribose 1-diphosphate. 34–35 is an orotate binding site; sequence FF. Residues 72–73, arginine 99, lysine 100, lysine 103, histidine 105, and 124–132 each bind 5-phospho-alpha-D-ribose 1-diphosphate; these read YK and DDVITAGTA. The orotate site is built by threonine 128 and arginine 156.

The protein belongs to the purine/pyrimidine phosphoribosyltransferase family. PyrE subfamily. As to quaternary structure, homodimer. It depends on Mg(2+) as a cofactor.

It catalyses the reaction orotidine 5'-phosphate + diphosphate = orotate + 5-phospho-alpha-D-ribose 1-diphosphate. The protein operates within pyrimidine metabolism; UMP biosynthesis via de novo pathway; UMP from orotate: step 1/2. Its function is as follows. Catalyzes the transfer of a ribosyl phosphate group from 5-phosphoribose 1-diphosphate to orotate, leading to the formation of orotidine monophosphate (OMP). This Hamiltonella defensa subsp. Acyrthosiphon pisum (strain 5AT) protein is Orotate phosphoribosyltransferase.